The sequence spans 83 residues: Large ribosomal subunit protein bL31B (83 aa).

It belongs to the bacterial ribosomal protein bL31 family. Type B subfamily. In terms of assembly, part of the 50S ribosomal subunit.

The protein is Large ribosomal subunit protein bL31B of Bacteroides fragilis (strain ATCC 25285 / DSM 2151 / CCUG 4856 / JCM 11019 / LMG 10263 / NCTC 9343 / Onslow / VPI 2553 / EN-2).